The primary structure comprises 261 residues: uncharacterized protein (261 aa).

A Response regulatory domain is found at 7–122; sequence TAVLADDEPL…RLASCCEKLQ (116 aa). 4-aspartylphosphate is present on D54. The HTH LytTR-type domain maps to 157 to 261; sequence LKASKGEEIH…RALQHLFKVS (105 aa).

This is an uncharacterized protein from Vibrio cholerae serotype O1 (strain ATCC 39315 / El Tor Inaba N16961).